A 272-amino-acid chain; its full sequence is Eukaryotic translation initiation factor 3 subunit G (272 aa).

Disordered regions lie at residues 1 to 28 (MPAL…PTEI) and 157 to 188 (APTT…GRDD). Residues 190 to 268 (TAIRISNLSE…LILNVEWSKP (79 aa)) enclose the RRM domain.

Belongs to the eIF-3 subunit G family. In terms of assembly, component of the eukaryotic translation initiation factor 3 (eIF-3) complex.

Its subcellular location is the cytoplasm. In terms of biological role, RNA-binding component of the eukaryotic translation initiation factor 3 (eIF-3) complex, which is involved in protein synthesis of a specialized repertoire of mRNAs and, together with other initiation factors, stimulates binding of mRNA and methionyl-tRNAi to the 40S ribosome. The eIF-3 complex specifically targets and initiates translation of a subset of mRNAs involved in cell proliferation. This subunit can bind 18S rRNA. The sequence is that of Eukaryotic translation initiation factor 3 subunit G from Aedes aegypti (Yellowfever mosquito).